Consider the following 102-residue polypeptide: MNKIRKGDEVIVLTGKDKGKRGTVQAVQGDKVVVEGVNVAKKHARPNPMLGTTGGVVDKLMPLHISNVALVDANGKPSRVGIKVEDGKRVRVLKTTGAVLAA.

The protein belongs to the universal ribosomal protein uL24 family. In terms of assembly, part of the 50S ribosomal subunit.

In terms of biological role, one of two assembly initiator proteins, it binds directly to the 5'-end of the 23S rRNA, where it nucleates assembly of the 50S subunit. Its function is as follows. One of the proteins that surrounds the polypeptide exit tunnel on the outside of the subunit. The protein is Large ribosomal subunit protein uL24 of Cupriavidus metallidurans (strain ATCC 43123 / DSM 2839 / NBRC 102507 / CH34) (Ralstonia metallidurans).